Here is a 301-residue protein sequence, read N- to C-terminus: Sulfate adenylyltransferase subunit 2 (301 aa).

Positions arginine 282–phenylalanine 301 are disordered.

This sequence belongs to the PAPS reductase family. CysD subfamily. Heterodimer composed of CysD, the smaller subunit, and CysN.

It carries out the reaction sulfate + ATP + H(+) = adenosine 5'-phosphosulfate + diphosphate. It functions in the pathway sulfur metabolism; hydrogen sulfide biosynthesis; sulfite from sulfate: step 1/3. Its function is as follows. With CysN forms the ATP sulfurylase (ATPS) that catalyzes the adenylation of sulfate producing adenosine 5'-phosphosulfate (APS) and diphosphate, the first enzymatic step in sulfur assimilation pathway. APS synthesis involves the formation of a high-energy phosphoric-sulfuric acid anhydride bond driven by GTP hydrolysis by CysN coupled to ATP hydrolysis by CysD. This chain is Sulfate adenylyltransferase subunit 2, found in Chelativorans sp. (strain BNC1).